We begin with the raw amino-acid sequence, 3411 residues long: Genome polyprotein (3411 aa).

The Cytoplasmic portion of the chain corresponds to 1–104 (MSGRKAQGKT…LSSRKRRSHD (104 aa)). Positions 102 to 121 (SHDALAVQFLILGMLLMAGG) are cleaved as a propeptide — ER anchor for the capsid protein C, removed in mature form by serine protease NS3. Residues 105 to 125 (ALAVQFLILGMLLMAGGVTLV) traverse the membrane as a helical segment. The Extracellular portion of the chain corresponds to 126 to 244 (RKNRWLLLNV…GERQLQKIER (119 aa)). N-linked (GlcNAc...) asparagine; by host glycosylation is found at Asn134 and Asn150. Residues 245–265 (WLVRNPFFAVTALTIAYLVGS) traverse the membrane as a helical segment. Over 266–270 (NMTQR) the chain is Cytoplasmic. A helical transmembrane segment spans residues 271–285 (VVIALLVLAVGPAYS). Topologically, residues 286 to 730 (AHCIGITDRD…TVFGSAFQGL (445 aa)) are extracellular. 8 disulfide bridges follow: Cys288–Cys315, Cys345–Cys401, Cys345–Cys406, Cys359–Cys390, Cys377–Cys401, Cys377–Cys406, Cys467–Cys568, and Cys585–Cys615. Positions 383 to 396 (DRGWGNGCGLFGKG) are fusion peptide. A helical membrane pass occupies residues 731-751 (FGGLSWITKVIMGAVLIWVGI). Residues 752–757 (NTRNMT) are Extracellular-facing. The chain crosses the membrane as a helical span at residues 758 to 778 (MSMSMILVGVIMMFLSLGVGA). Residues 779-1132 (DQGCAINFGK…LVRSWVTAGE (354 aa)) are Extracellular-facing. Intrachain disulfides connect Cys782–Cys793, Cys833–Cys921, Cys957–Cys1002, Cys1058–Cys1107, Cys1069–Cys1091, and Cys1090–Cys1094. N-linked (GlcNAc...) asparagine; by host glycans are attached at residues Asn908 and Asn986. The helical transmembrane segment at 1133–1153 (IHAVPFGLVSMMIAMEVVLRK) threads the bilayer. At 1154-1201 (RQGPKQMLVGGVVLLGAMLVGQVTLLDLLKLTVAVGLHFHEMNNGGDA) the chain is on the cytoplasmic side. A helical transmembrane segment spans residues 1202–1222 (MYMALIAAFSIRPGLLIGFGL). Over 1223-1287 (RTLWSPRERL…ILPLMALLTP (65 aa)) the chain is Lumenal. The chain crosses the membrane as a helical span at residues 1288–1308 (VTMAEVRLAAMLFCTVVIIGV). The Cytoplasmic segment spans residues 1309-1355 (LHQNSKDTSMQKTIPLVALTLTSYLGLTQPFLGLCAFLATRLFGRRS). A helical membrane pass occupies residues 1356 to 1376 (IPVNEALAAAGLVGVLAGLAF). Over 1377–1378 (QE) the chain is Lumenal. Residues 1379 to 1399 (MENFLGPIAVGGILMMLVSVA) traverse the membrane as a helical segment. At 1400–1456 (GRVDGLELRKLGEVSWEEEAEISGSSARYDVALSEQGEFKLLSEEKVPWDQVVMTSL) the chain is on the cytoplasmic side. The interval 1407-1446 (LRKLGEVSWEEEAEISGSSARYDVALSEQGEFKLLSEEKV) is interacts with and activates NS3 protease. Positions 1457–1477 (ALVGAAIHPFALLLVLAGWLF) form an intramembrane region, helical. Over 1478–2157 (HVKGARRSGD…RNALSMMPEA (680 aa)) the chain is Cytoplasmic. Residues 1485–1665 (SGDVLWDIPT…EVKEEGKEEL (181 aa)) form the Peptidase S7 domain. Catalysis depends on charge relay system; for serine protease NS3 activity residues His1537, Asp1561, and Ser1622. Positions 1669–1825 (PTMLKKGMTT…HSNGEIEDVQ (157 aa)) constitute a Helicase ATP-binding domain. Positions 1673-1676 (KKGM) are important for RNA-binding. 1682–1689 (FHPGAGKT) is a binding site for ATP. A DEAH box motif is present at residues 1773 to 1776 (DEAH). A Helicase C-terminal domain is found at 1820–1997 (EIEDVQTDIP…VRGGMVAPLY (178 aa)). An N6-acetyllysine; by host modification is found at Lys1877. The segment at 1942 to 1961 (AAQRRGRIGRNPNRDGDSYY) is disordered. The helical transmembrane segment at 2158–2178 (MTIAMLFILAGLLTSGMVIFF) threads the bilayer. The Lumenal segment spans residues 2179–2186 (MSPKGISR). Residues 2187–2207 (MSMAMGTMAGCGYLMFLGGVK) constitute an intramembrane region (helical). The Lumenal segment spans residues 2208–2209 (PT). The helical transmembrane segment at 2210 to 2230 (HISYIMLIFFVLMVVVIPEPG) threads the bilayer. The Cytoplasmic segment spans residues 2231–2241 (QQRSIQDNQVA). Residues 2242-2262 (YLIIGILTLVSVVAANELGML) traverse the membrane as a helical segment. Residues 2263-2293 (EKTKEDLFGKKDLIPSSASPWSWPDLDLKPG) lie on the Lumenal side of the membrane. The segment at residues 2294–2314 (AAWTVYVGIVTMLSPMLHHWI) is an intramembrane region (helical). Topologically, residues 2315–2360 (KVEYGNLSLSGIAQSASVLSFMDKGIPFMKMNISVIILLVSGWNSI) are lumenal. Residues 2361–2380 (TVMPLLCGIGCAMLHWSLIL) form a helical membrane-spanning segment. Residues 2381-2421 (PGIKAQQSKLAQRRVFHGVAKNPVVDGNPTVDIEEAPEMPA) lie on the Cytoplasmic side of the membrane. A helical membrane pass occupies residues 2422 to 2442 (LYEKKLALYLLLALSLASVAM). The Lumenal segment spans residues 2443–2445 (CRT). Residues 2446 to 2466 (PFSLAEGIVLASAALGPLIEG) traverse the membrane as a helical segment. The Cytoplasmic portion of the chain corresponds to 2467 to 3411 (NTSLLWNGPM…DADLQPGELI (945 aa)). Positions 2507-2771 (GRANGKTLGE…DVILPIGTRS (265 aa)) constitute an mRNA cap 0-1 NS5-type MT domain. Residue Ser2562 participates in S-adenosyl-L-methionine binding. Residue Ser2562 is modified to Phosphoserine. The For 2'-O-MTase activity role is filled by Lys2567. Residues Gly2592, Trp2593, Thr2610, Leu2611, Asp2637, and Ile2638 each contribute to the S-adenosyl-L-methionine site. The active-site For 2'-O-MTase activity is the Asp2652. Ile2653 lines the S-adenosyl-L-methionine pocket. Residues Lys2688 and Glu2724 each act as for 2'-O-MTase activity in the active site. Residue Tyr2726 participates in S-adenosyl-L-methionine binding. The short motif at 2878–2911 (RKIMKVVNRWLFRHLAREKNPRLCTKEEFIAKVR) is the Nuclear localization signal element. Zn(2+) contacts are provided by Glu2945, His2949, Cys2954, and Cys2957. The RdRp catalytic domain maps to 3035–3187 (GGFYADDTAG…RPIDDRFGLA (153 aa)). Zn(2+)-binding residues include His3222, Cys3238, and Cys3357.

This sequence in the N-terminal section; belongs to the class I-like SAM-binding methyltransferase superfamily. mRNA cap 0-1 NS5-type methyltransferase family. As to quaternary structure, homodimer. Interacts (via N-terminus) with host EXOC1 (via C-terminus); this interaction results in EXOC1 degradation through the proteasome degradation pathway. Forms heterodimers with envelope protein E in the endoplasmic reticulum and Golgi. In terms of assembly, homodimer; in the endoplasmic reticulum and Golgi. Interacts with protein prM. Interacts with non-structural protein 1. As to quaternary structure, homodimer; Homohexamer when secreted. Interacts with envelope protein E. Interacts (via N-terminus) with serine protease NS3. In terms of assembly, forms a heterodimer with serine protease NS3. May form homooligomers. As to quaternary structure, forms a heterodimer with NS2B. Interacts with non-structural protein 2A (via N-terminus). Interacts with NS4B. Interacts with unphosphorylated RNA-directed RNA polymerase NS5; this interaction stimulates RNA-directed RNA polymerase NS5 guanylyltransferase activity. NS3 interacts with host PDCD6IP; this interaction contributes to virion release. Interacts with serine protease NS3. In terms of assembly, homodimer. Interacts with host STAT2; this interaction prevents the establishment of cellular antiviral state. Interacts with serine protease NS3. Interacts with host TRIM23; this interaction leads to NS5 ubiquitination. Specific enzymatic cleavages in vivo yield mature proteins. The nascent capsid protein C contains a C-terminal hydrophobic domain that act as a signal sequence for translocation of prM into the lumen of the ER. Mature capsid protein C is cleaved at a site upstream of this hydrophobic domain by NS3. prM is cleaved in post-Golgi vesicles by a host furin, releasing the mature small envelope protein M, and peptide pr. Non-structural protein 2A-alpha, a C-terminally truncated form of non-structural protein 2A, results from partial cleavage by NS3. Specific enzymatic cleavages in vivo yield mature proteins peptide 2K acts as a signal sequence and is removed from the N-terminus of NS4B by the host signal peptidase in the ER lumen. Signal cleavage at the 2K-4B site requires a prior NS3 protease-mediated cleavage at the 4A-2K site. In terms of processing, cleaved in post-Golgi vesicles by a host furin, releasing the mature small envelope protein M, and peptide pr. This cleavage is incomplete as up to 30% of viral particles still carry uncleaved prM. Post-translationally, N-glycosylated. N-glycosylated. The excreted form is glycosylated and this is required for efficient secretion of the protein from infected cells. In terms of processing, polyubiquitinated; ubiquitination is probably mediated by host TRIM23 and is prerequisite for NS5-STAT2 interaction. NS5 is not ISGylated or sumoylated. Post-translationally, acetylated by host KAT5. Acetylation modulates NS3 RNA-binding and unwinding activities and plays an important positive role for viral replication. Phosphorylated on serines residues. This phosphorylation may trigger NS5 nuclear localization.

It is found in the virion. Its subcellular location is the host nucleus. The protein localises to the host cytoplasm. It localises to the host perinuclear region. The protein resides in the secreted. It is found in the virion membrane. Its subcellular location is the host endoplasmic reticulum membrane. The enzyme catalyses Selective hydrolysis of -Xaa-Xaa-|-Yaa- bonds in which each of the Xaa can be either Arg or Lys and Yaa can be either Ser or Ala.. It carries out the reaction RNA(n) + a ribonucleoside 5'-triphosphate = RNA(n+1) + diphosphate. The catalysed reaction is a ribonucleoside 5'-triphosphate + H2O = a ribonucleoside 5'-diphosphate + phosphate + H(+). It catalyses the reaction ATP + H2O = ADP + phosphate + H(+). The enzyme catalyses a 5'-end (5'-triphosphoguanosine)-ribonucleoside in mRNA + S-adenosyl-L-methionine = a 5'-end (N(7)-methyl 5'-triphosphoguanosine)-ribonucleoside in mRNA + S-adenosyl-L-homocysteine. It carries out the reaction a 5'-end (N(7)-methyl 5'-triphosphoguanosine)-ribonucleoside in mRNA + S-adenosyl-L-methionine = a 5'-end (N(7)-methyl 5'-triphosphoguanosine)-(2'-O-methyl-ribonucleoside) in mRNA + S-adenosyl-L-homocysteine + H(+). Its function is as follows. Plays a role in virus budding by binding to the cell membrane and gathering the viral RNA into a nucleocapsid that forms the core of a mature virus particle. During virus entry, may induce genome penetration into the host cytoplasm after hemifusion induced by the surface proteins. Can migrate to the cell nucleus where it modulates host functions. Inhibits RNA silencing by interfering with host Dicer. Functionally, prevents premature fusion activity of envelope proteins in trans-Golgi by binding to envelope protein E at pH6.0. After virion release in extracellular space, gets dissociated from E dimers. In terms of biological role, acts as a chaperone for envelope protein E during intracellular virion assembly by masking and inactivating envelope protein E fusion peptide. prM is the only viral peptide matured by host furin in the trans-Golgi network probably to avoid catastrophic activation of the viral fusion activity in acidic Golgi compartment prior to virion release. prM-E cleavage is inefficient, and many virions are only partially matured. These uncleaved prM would play a role in immune evasion. Its function is as follows. May play a role in virus budding. Exerts cytotoxic effects by activating a mitochondrial apoptotic pathway through M ectodomain. May display a viroporin activity. Binds to host cell surface receptor and mediates fusion between viral and cellular membranes. Envelope protein is synthesized in the endoplasmic reticulum in the form of heterodimer with protein prM. They play a role in virion budding in the ER, and the newly formed immature particle is covered with 60 spikes composed of heterodimer between precursor prM and envelope protein E. The virion is transported to the Golgi apparatus where the low pH causes dissociation of PrM-E heterodimers and formation of E homodimers. prM-E cleavage is inefficient, and many virions are only partially matured. These uncleaved prM would play a role in immune evasion. Functionally, involved in immune evasion, pathogenesis and viral replication. Once cleaved off the polyprotein, is targeted to three destinations: the viral replication cycle, the plasma membrane and the extracellular compartment. Essential for viral replication. Required for formation of the replication complex and recruitment of other non-structural proteins to the ER-derived membrane structures. Excreted as a hexameric lipoparticle that plays a role against host immune response. Antagonizing the complement function. Binds to the host macrophages and dendritic cells. Inhibits signal transduction originating from Toll-like receptor 3 (TLR3). In terms of biological role, component of the viral RNA replication complex that functions in virion assembly and antagonizes the host immune response. Its function is as follows. Required cofactor for the serine protease function of NS3. May have membrane-destabilizing activity and form viroporins. Displays three enzymatic activities: serine protease, NTPase and RNA helicase. NS3 serine protease, in association with NS2B, performs its autocleavage and cleaves the polyprotein at dibasic sites in the cytoplasm: C-prM, NS2A-NS2B, NS2B-NS3, NS3-NS4A, NS4A-2K and NS4B-NS5. NS3 RNA helicase binds RNA and unwinds dsRNA in the 3' to 5' direction. Also plays a role in virus assembly. Functionally, regulates the ATPase activity of the NS3 helicase activity. NS4A allows NS3 helicase to conserve energy during unwinding. In terms of biological role, functions as a signal peptide for NS4B and is required for the interferon antagonism activity of the latter. Its function is as follows. Induces the formation of ER-derived membrane vesicles where the viral replication takes place. Inhibits interferon (IFN)-induced host STAT1 phosphorylation and nuclear translocation, thereby preventing the establishment of cellular antiviral state by blocking the IFN-alpha/beta pathway. Replicates the viral (+) and (-) RNA genome, and performs the capping of genomes in the cytoplasm. NS5 methylates viral RNA cap at guanine N-7 and ribose 2'-O positions. Besides its role in RNA genome replication, also prevents the establishment of cellular antiviral state by blocking the interferon-alpha/beta (IFN-alpha/beta) signaling pathway. IFN-I induces binding of NS5 to host IFN-activated transcription factor STAT2, preventing its transcriptional activity. Host TRIM23 is the E3 ligase that interacts with and polyubiquitinates NS5 to promote its binding to STAT2 and trigger IFN-I signaling inhibition. This chain is Genome polyprotein, found in Yellow fever virus (isolate Ivory Coast/1999) (YFV).